We begin with the raw amino-acid sequence, 254 residues long: 4-hydroxy-tetrahydrodipicolinate reductase (254 aa).

Residue 7–12 (GASGRI) coordinates NAD(+). Arg35 is a binding site for NADP(+). NAD(+) is bound by residues 91–93 (GTT) and 115–118 (AHNM). The active-site Proton donor/acceptor is the His147. His148 serves as a coordination point for (S)-2,3,4,5-tetrahydrodipicolinate. The active-site Proton donor is the Lys151. 157 to 158 (GT) provides a ligand contact to (S)-2,3,4,5-tetrahydrodipicolinate.

Belongs to the DapB family.

It is found in the cytoplasm. It carries out the reaction (S)-2,3,4,5-tetrahydrodipicolinate + NAD(+) + H2O = (2S,4S)-4-hydroxy-2,3,4,5-tetrahydrodipicolinate + NADH + H(+). It catalyses the reaction (S)-2,3,4,5-tetrahydrodipicolinate + NADP(+) + H2O = (2S,4S)-4-hydroxy-2,3,4,5-tetrahydrodipicolinate + NADPH + H(+). It participates in amino-acid biosynthesis; L-lysine biosynthesis via DAP pathway; (S)-tetrahydrodipicolinate from L-aspartate: step 4/4. Functionally, catalyzes the conversion of 4-hydroxy-tetrahydrodipicolinate (HTPA) to tetrahydrodipicolinate. The sequence is that of 4-hydroxy-tetrahydrodipicolinate reductase from Helicobacter pylori (strain HPAG1).